The sequence spans 177 residues: NADH-quinone oxidoreductase subunit B (177 aa).

4 residues coordinate [4Fe-4S] cluster: cysteine 56, cysteine 57, cysteine 121, and cysteine 151.

The protein belongs to the complex I 20 kDa subunit family. As to quaternary structure, NDH-1 is composed of 14 different subunits. Subunits NuoB, C, D, E, F, and G constitute the peripheral sector of the complex. It depends on [4Fe-4S] cluster as a cofactor.

It is found in the cell inner membrane. It catalyses the reaction a quinone + NADH + 5 H(+)(in) = a quinol + NAD(+) + 4 H(+)(out). NDH-1 shuttles electrons from NADH, via FMN and iron-sulfur (Fe-S) centers, to quinones in the respiratory chain. Couples the redox reaction to proton translocation (for every two electrons transferred, four hydrogen ions are translocated across the cytoplasmic membrane), and thus conserves the redox energy in a proton gradient. This chain is NADH-quinone oxidoreductase subunit B, found in Jannaschia sp. (strain CCS1).